The primary structure comprises 257 residues: Ribonuclease HII (257 aa).

The 186-residue stretch at 72 to 257 (TYIAGIDEVG…FAPIKDMIQK (186 aa)) folds into the RNase H type-2 domain. Asp78, Glu79, and Asp170 together coordinate a divalent metal cation.

It belongs to the RNase HII family. The cofactor is Mn(2+). Mg(2+) serves as cofactor.

It is found in the cytoplasm. It carries out the reaction Endonucleolytic cleavage to 5'-phosphomonoester.. In terms of biological role, endonuclease that specifically degrades the RNA of RNA-DNA hybrids. The protein is Ribonuclease HII of Bacillus cereus (strain ZK / E33L).